The primary structure comprises 464 residues: MTQAQTWSQRFEKALHPAIATFNASIGFDIELIEYDLTGSVAHAKMLVKTGIISPEEGEALVNGLETIREEYRQGQFNPGVDAEDIHFAVERRLTEIAGDVGKKLHTGRSRNDQVGTDTRLYLKDQIQQIRTQILEFQGVLLDLATNHVHTLIPGYTHLQRAQPLSLAHHLLAYVEMAHRDWERLGEVYQRVNTSPLGCGALAGTTFPIDRHYSAELLGFDRVYANSLDGVSDRDWAIEFLSASSLILVHLSRLSEEIIFWASQEFGFITLTDSCSTGSSIMPQKKNPDVPELVRGKTGRVFGHLQGLLVLMKGLPLAYNKDLQEDKEALFDAVKTVKGCLEAMTILLSQGMEFRPQRLAEAVAEDFSNATDVADYLATKGVPFREAYNLVGKVVRTCLESGKLLKDLTLDEWKSLHPEFDVDIYDAIAPLQVVAARNSYGGTGFEQVKSALQNARDRWEAAQS.

Belongs to the lyase 1 family. Argininosuccinate lyase subfamily.

It localises to the cytoplasm. The catalysed reaction is 2-(N(omega)-L-arginino)succinate = fumarate + L-arginine. Its pathway is amino-acid biosynthesis; L-arginine biosynthesis; L-arginine from L-ornithine and carbamoyl phosphate: step 3/3. With respect to regulation, strongly inhibited by L-arginine. Inhibitory effects are lowered at pH 7.0 compared to those at pH 8.0. At 37 degrees Celsius and pH 7.5, activity decreases to 73% and 31% in the presence of 1 mM and 10 mM arginine, respectively. Activity also decreases to 84%, 93%, 82% and 85% in the presence of 10 mM sodium citrate, citrulline, asparatate and glutamate, respectively. Activity decreases to 96% in presence of 1 mM L-lysine. Catalyzes the last step of arginine biosynthesis, the conversion of argininosuccinate into L-arginine and fumarate. The protein is Argininosuccinate lyase of Arthrospira platensis (strain NIES-39 / UTEX 3086 / IAM M-135) (Spirulina platensis).